We begin with the raw amino-acid sequence, 560 residues long: Membrane-bound O-acyltransferase GUP1 (560 aa).

Residues Met-1 to Lys-43 are Extracellular-facing. Residues Phe-44–Ser-64 traverse the membrane as a helical segment. Residues Ser-65–Asn-101 are Cytoplasmic-facing. The chain crosses the membrane as a helical span at residues Phe-102–Ser-122. The Extracellular portion of the chain corresponds to Thr-123–Asp-131. The chain crosses the membrane as a helical span at residues Leu-132–Ala-152. Residues His-153–Lys-165 lie on the Cytoplasmic side of the membrane. Residues Asn-166–Ile-185 traverse the membrane as a helical segment. Topologically, residues Asn-186–Leu-276 are extracellular. A helical transmembrane segment spans residues Met-277 to Phe-297. The Cytoplasmic portion of the chain corresponds to Asn-298–Arg-322. The helical transmembrane segment at Phe-323–Ser-343 threads the bilayer. Topologically, residues Lys-344–Thr-352 are extracellular. The chain crosses the membrane as a helical span at residues Pro-353–Ile-373. At Pro-374–Arg-432 the chain is on the cytoplasmic side. 2 helical membrane passes run Val-433–Leu-453 and Leu-454–Phe-474. His-447 is an active-site residue. Residues Ser-475–His-485 lie on the Cytoplasmic side of the membrane. A helical transmembrane segment spans residues Val-486 to Phe-506. The Extracellular segment spans residues Cys-507–Gly-526. Residues Phe-527–Ile-547 traverse the membrane as a helical segment. At Arg-548–Cys-560 the chain is on the cytoplasmic side.

This sequence belongs to the membrane-bound acyltransferase family. Interacts with mitochondrial outer membrane voltage-dependent anion channel (VDAC) POR1.

It localises to the cell membrane. It is found in the endoplasmic reticulum membrane. The protein localises to the mitochondrion membrane. In terms of biological role, membrane-bound O-acyltransferase involved in the remodeling of glycosylphosphatidylinositol (GPI) anchors. Acts only on GPI-anchored proteins, but not on free GPI lipids. Acts as an acyltransferase for GPI anchors that adds C26 fatty acids to the sn2 position of lyso-PI-containing GPI anchors. PER1 first deacylates, GUP1 subsequently reacylates the anchor lipid, thus replacing a shorter fatty acid (C16:0 or C18:0) by C26:0. Also involved in lipid metabolism, having profound effects on sphingolipid-sterol-ordered domains integrity and assembly. Together with GUP2, has an influence on the chemical composition of the yeast extracellular matrix (yECM) in yeast multicellular aggregates, such as biofilms and colonies. Involved in cell integrity and apoptosis. The polypeptide is Membrane-bound O-acyltransferase GUP1 (GUP1) (Saccharomyces cerevisiae (strain ATCC 204508 / S288c) (Baker's yeast)).